The primary structure comprises 145 residues: D-aminoacyl-tRNA deacylase (145 aa).

The short motif at 137 to 138 (GP) is the Gly-cisPro motif, important for rejection of L-amino acids element.

The protein belongs to the DTD family. In terms of assembly, homodimer.

It localises to the cytoplasm. The catalysed reaction is glycyl-tRNA(Ala) + H2O = tRNA(Ala) + glycine + H(+). It catalyses the reaction a D-aminoacyl-tRNA + H2O = a tRNA + a D-alpha-amino acid + H(+). In terms of biological role, an aminoacyl-tRNA editing enzyme that deacylates mischarged D-aminoacyl-tRNAs. Also deacylates mischarged glycyl-tRNA(Ala), protecting cells against glycine mischarging by AlaRS. Acts via tRNA-based rather than protein-based catalysis; rejects L-amino acids rather than detecting D-amino acids in the active site. By recycling D-aminoacyl-tRNA to D-amino acids and free tRNA molecules, this enzyme counteracts the toxicity associated with the formation of D-aminoacyl-tRNA entities in vivo and helps enforce protein L-homochirality. The sequence is that of D-aminoacyl-tRNA deacylase from Alcanivorax borkumensis (strain ATCC 700651 / DSM 11573 / NCIMB 13689 / SK2).